Reading from the N-terminus, the 581-residue chain is MKIDMNLLKRRIKVANKEVKADTVVKNGKILNVFTGDIMRGDIAIVDGFIAGIGQYEGEQIIYAQNKVIVPGFIDGHMHIESTMLTPNELSKVLIQHGVTTVMADPHEIGNVAGIDGINFMLNASEELPIDVFIMLPSCVPATSFENSGAKLDAEDLQPFYTHPRVLGLAEFMDFSSIVNLNEKMLQKIINANLNGSIVDGHAPGLSKEELNVYISTGIYADHECANVREAKERLELGMYLMIREGTAAKELKKLIKVVTPTNSRRCMLVTDDKLPDDLIVEGSVDHNVRLAIKEGLDPVTAIQMVTINAAEFFGLRSFGAIAPGYQADLLILDELQNVSIDKVLKKGICVVDNGEIKKEEFKINDNSKELAMKLPKINMKELEKNAFKIPLSSDLCNVIEIVPNSLITYHRVEKVDIDKGNFSVSIANDQLKMAVIERHHATGNIGLGIVKGFGIKNGAIATTVAHDSHNIVVVGTSDEEMFLAVNHLKKMNGGIAIASGKEIIASLPLAIGGLISENGYLEVQQQLKILNQALSIIGVNADFNPFLTLSFLTLPVIPEIKLTDTGLFEFKTFSHIGVQA.

The protein belongs to the metallo-dependent hydrolases superfamily. Adenine deaminase family. Requires Mn(2+) as cofactor.

It carries out the reaction adenine + H2O + H(+) = hypoxanthine + NH4(+). The polypeptide is Adenine deaminase (Clostridium botulinum (strain Eklund 17B / Type B)).